The sequence spans 255 residues: Hemin import ATP-binding protein HmuV (255 aa).

One can recognise an ABC transporter domain in the interval 2–238; sequence LQVEGLYLCR…AALKAVYGID (237 aa). ATP is bound at residue 34–41; the sequence is GPNGAGKS.

The protein belongs to the ABC transporter superfamily. Heme (hemin) importer (TC 3.A.1.14.5) family. In terms of assembly, the complex is composed of two ATP-binding proteins (HmuV), two transmembrane proteins (HmuU) and a solute-binding protein (HmuT).

It is found in the cell inner membrane. Part of the ABC transporter complex HmuTUV involved in hemin import. Responsible for energy coupling to the transport system. The polypeptide is Hemin import ATP-binding protein HmuV (Pseudomonas putida (strain ATCC 47054 / DSM 6125 / CFBP 8728 / NCIMB 11950 / KT2440)).